The chain runs to 349 residues: GDSL esterase/lipase At1g58525 (349 aa).

The signal sequence occupies residues 1–19; sequence MKLQILLLALVLIAVEANA. Asn25 is a glycosylation site (N-linked (GlcNAc...) asparagine). The active-site Nucleophile is the Ser37. A glycan (N-linked (GlcNAc...) asparagine) is linked at Asn316. Residues Asp324 and His327 contribute to the active site.

The protein belongs to the 'GDSL' lipolytic enzyme family.

It localises to the secreted. The sequence is that of GDSL esterase/lipase At1g58525 from Arabidopsis thaliana (Mouse-ear cress).